The following is a 367-amino-acid chain: Mating-type protein ALPHA2 (367 aa).

A DNA-binding region (homeobox; TALE-type) is located at residues 273 to 338; it reads GADAIDSEKL…NKRRTGAKKR (66 aa).

The protein belongs to the TALE/M-ATYP homeobox family. Forms a heterodimer with A1.

Its subcellular location is the nucleus. Mating type proteins are sequence specific DNA-binding proteins that act as master switches in yeast differentiation by controlling gene expression in a cell type-specific fashion. Transcriptional corepressor that acts in conjunction with A1 to repress transcription of haploid-specific genes. The polypeptide is Mating-type protein ALPHA2 (MATB2) (Yarrowia lipolytica (strain CLIB 122 / E 150) (Yeast)).